A 380-amino-acid polypeptide reads, in one-letter code: Cytochrome b (380 aa).

4 consecutive transmembrane segments (helical) span residues 34 to 54 (FGSL…LLAT), 78 to 99 (WLIR…YLHI), 114 to 134 (WNTG…GYVL), and 179 to 199 (FFAL…IHLT). Heme b contacts are provided by His-84 and His-98. 2 residues coordinate heme b: His-183 and His-197. His-202 serves as a coordination point for a ubiquinone. 4 helical membrane passes run 227–247 (LKDI…ALFS), 289–309 (LGGV…PLLH), 321–341 (FSQF…WVGS), and 348–368 (FIII…LLFP).

The protein belongs to the cytochrome b family. In terms of assembly, the cytochrome bc1 complex contains 11 subunits: 3 respiratory subunits (MT-CYB, CYC1 and UQCRFS1), 2 core proteins (UQCRC1 and UQCRC2) and 6 low-molecular weight proteins (UQCRH/QCR6, UQCRB/QCR7, UQCRQ/QCR8, UQCR10/QCR9, UQCR11/QCR10 and a cleavage product of UQCRFS1). This cytochrome bc1 complex then forms a dimer. Heme b serves as cofactor.

The protein localises to the mitochondrion inner membrane. Component of the ubiquinol-cytochrome c reductase complex (complex III or cytochrome b-c1 complex) that is part of the mitochondrial respiratory chain. The b-c1 complex mediates electron transfer from ubiquinol to cytochrome c. Contributes to the generation of a proton gradient across the mitochondrial membrane that is then used for ATP synthesis. The protein is Cytochrome b (MT-CYB) of Alle alle (Dovekie).